A 341-amino-acid chain; its full sequence is Gibberellin 2-beta-dioxygenase 2 (341 aa).

The Fe2OG dioxygenase domain maps to 179 to 283; that stretch reads KSDSCLRLNH…RISMIYFGGP (105 aa). Positions 207, 209, and 264 each coordinate Fe cation. Arg274 is an active-site residue. Arg274 is a 2-oxoglutarate binding site.

It belongs to the iron/ascorbate-dependent oxidoreductase family. GA2OX subfamily. Requires Fe(2+) as cofactor. As to expression, preferentially expressed in flowers, siliques, and upper stems. Expressed in cotyledons, at the base of the shoot apical meristem and developing leaf primordia.

The catalysed reaction is gibberellin A1 + 2-oxoglutarate + O2 = gibberellin A8 + succinate + CO2. It functions in the pathway plant hormone biosynthesis; gibberellin biosynthesis. Functionally, catalyzes the 2-beta-hydroxylation of several biologically active gibberellins, leading to the homeostatic regulation of their endogenous level. Catabolism of gibberellins (GAs) plays a central role in plant development. Converts GA9/GA20 to GA51/GA29 and GA4/GA1 to GA34/GA8. The protein is Gibberellin 2-beta-dioxygenase 2 (GA2OX2) of Arabidopsis thaliana (Mouse-ear cress).